The chain runs to 238 residues: Orotidine 5'-phosphate decarboxylase (238 aa).

Residues D10, K32, 59 to 68 (DLKLHDIPNT), T122, R184, Q193, G213, and R214 each bind substrate. The active-site Proton donor is K61.

It belongs to the OMP decarboxylase family. Type 1 subfamily. In terms of assembly, homodimer.

It catalyses the reaction orotidine 5'-phosphate + H(+) = UMP + CO2. It participates in pyrimidine metabolism; UMP biosynthesis via de novo pathway; UMP from orotate: step 2/2. Functionally, catalyzes the decarboxylation of orotidine 5'-monophosphate (OMP) to uridine 5'-monophosphate (UMP). This Bacillus mycoides (strain KBAB4) (Bacillus weihenstephanensis) protein is Orotidine 5'-phosphate decarboxylase.